Here is an 81-residue protein sequence, read N- to C-terminus: Cytotoxin 1a (81 aa).

The first 21 residues, 1-21 (MKTLLLTLVVVTIVCLDLGYT), serve as a signal peptide directing secretion. Disulfide bonds link cysteine 24/cysteine 42, cysteine 35/cysteine 59, cysteine 63/cysteine 74, and cysteine 75/cysteine 80.

The protein belongs to the three-finger toxin family. Short-chain subfamily. Type IA cytotoxin sub-subfamily. In terms of assembly, monomer in solution; Homodimer and oligomer in the presence of negatively charged lipids forming a pore with a size ranging between 20 and 30 Angstroms. In terms of tissue distribution, expressed by the venom gland.

It localises to the secreted. It is found in the target cell membrane. Shows cytolytic activity on many different cells by forming pore in lipid membranes. In vivo, increases heart rate or kills the animal by cardiac arrest. In addition, it binds to heparin with high affinity, interacts with Kv channel-interacting protein 1 (KCNIP1) in a calcium-independent manner, and binds to integrin alpha-V/beta-3 (ITGAV/ITGB3) with moderate affinity. The sequence is that of Cytotoxin 1a from Naja atra (Chinese cobra).